A 210-amino-acid polypeptide reads, in one-letter code: Dephospho-CoA kinase (210 aa).

In terms of domain architecture, DPCK spans 4–202; the sequence is WVGLTGGIGS…AFYSGIFASK (199 aa). 12–17 provides a ligand contact to ATP; it reads GSGKSA.

This sequence belongs to the CoaE family.

The protein resides in the cytoplasm. The enzyme catalyses 3'-dephospho-CoA + ATP = ADP + CoA + H(+). It participates in cofactor biosynthesis; coenzyme A biosynthesis; CoA from (R)-pantothenate: step 5/5. Its function is as follows. Catalyzes the phosphorylation of the 3'-hydroxyl group of dephosphocoenzyme A to form coenzyme A. This is Dephospho-CoA kinase from Neisseria gonorrhoeae (strain ATCC 700825 / FA 1090).